Here is a 130-residue protein sequence, read N- to C-terminus: MARVKRAVNAQKKRRTLLATASGYRGQRSRLYRKAKEQVLHSMQYSYRDRRDRKGDFRQLWIQRINAGARANGLTYNRLIQGLKLAGIEVDRKILADLAVNDAAAFAAIVEKARAAVAEEGTGGAAAQAA.

Belongs to the bacterial ribosomal protein bL20 family.

Its function is as follows. Binds directly to 23S ribosomal RNA and is necessary for the in vitro assembly process of the 50S ribosomal subunit. It is not involved in the protein synthesizing functions of that subunit. The protein is Large ribosomal subunit protein bL20 of Salinispora tropica (strain ATCC BAA-916 / DSM 44818 / JCM 13857 / NBRC 105044 / CNB-440).